The sequence spans 162 residues: Regulatory protein RecX (162 aa).

Belongs to the RecX family.

It is found in the cytoplasm. Modulates RecA activity. In Xanthomonas axonopodis pv. citri (strain 306), this protein is Regulatory protein RecX.